The sequence spans 475 residues: Phenolic acid decarboxylase (475 aa).

Mn(2+) is bound by residues asparagine 161, histidine 183, and glutamate 225. Prenylated FMN contacts are provided by residues 161–166 and 182–183; these read NVGIYR and MH. The active-site Proton donor is the glutamate 274.

The protein belongs to the UbiD family. YclC subfamily. Prenylated FMN serves as cofactor. The cofactor is Mn(2+).

It carries out the reaction 4-hydroxybenzoate + H(+) = phenol + CO2. The catalysed reaction is vanillate + H(+) = guaiacol + CO2. In terms of biological role, involved in the non-oxidative decarboxylation and detoxification of phenolic derivatives under both aerobic and anaerobic conditions. Phenolic acid decarboxylase that catalyzes the reversible decarboxylation of 4-hydroxybenzoate and vanillate. This chain is Phenolic acid decarboxylase, found in Escherichia coli O157:H7.